A 160-amino-acid polypeptide reads, in one-letter code: Nucleotide-binding protein VV1636 (160 aa).

This sequence belongs to the YajQ family.

Functionally, nucleotide-binding protein. In Vibrio vulnificus (strain YJ016), this protein is Nucleotide-binding protein VV1636.